We begin with the raw amino-acid sequence, 98 residues long: Co-chaperonin GroES (98 aa).

Belongs to the GroES chaperonin family. Heptamer of 7 subunits arranged in a ring. Interacts with the chaperonin GroEL.

It localises to the cytoplasm. In terms of biological role, together with the chaperonin GroEL, plays an essential role in assisting protein folding. The GroEL-GroES system forms a nano-cage that allows encapsulation of the non-native substrate proteins and provides a physical environment optimized to promote and accelerate protein folding. GroES binds to the apical surface of the GroEL ring, thereby capping the opening of the GroEL channel. The sequence is that of Co-chaperonin GroES from Bartonella bacilliformis (strain ATCC 35685 / KC583 / Herrer 020/F12,63).